A 172-amino-acid chain; its full sequence is Chromosome-anchoring protein RacA (172 aa).

A DNA-binding region (H-T-H motif) is located at residues 5–25; that stretch reads TSDVAIRLGVSPKTIQRWVRK. Disordered stretches follow at residues 57–76 and 142–172; these read AAME…RNNI and QLNN…GLFA. The segment covering 62-71 has biased composition (pro residues); it reads PPTPKRPPTP. Residues 83–146 are a coiled coil; sequence ESIEPEIARV…ARLEQQLNNR (64 aa). Residues 142–151 are compositionally biased toward polar residues; the sequence is QLNNRPPSSH.

It belongs to the RacA family.

It localises to the cytoplasm. In terms of biological role, required for the formation of axial filaments and for anchoring the origin regions at the cell poles in sporulating cells, thus ensuring proper chromosome segregation in the prespore. Binds in a dispersed manner throughout the chromosome but preferentially to sites clustered in the origin portion of the chromosome, causing condensation of the chromosome and its remodeling into an elongated, anchored structure. The chain is Chromosome-anchoring protein RacA from Geobacillus kaustophilus (strain HTA426).